A 63-amino-acid chain; its full sequence is Potassium channel toxin MeuTXKalpha4 (63 aa).

An N-terminal signal peptide occupies residues methionine 1 to glycine 28. 3 cysteine pairs are disulfide-bonded: cysteine 35–cysteine 53, cysteine 39–cysteine 59, and cysteine 43–cysteine 61.

Belongs to the short scorpion toxin superfamily. Potassium channel inhibitor family. Expressed by the venom gland.

Its subcellular location is the secreted. In terms of biological role, may block voltage-gated potassium channels (Kv). The chain is Potassium channel toxin MeuTXKalpha4 from Mesobuthus eupeus (Lesser Asian scorpion).